We begin with the raw amino-acid sequence, 584 residues long: UBX domain-containing protein 2 (584 aa).

Residues 1–80 (MPVVNHEDSE…PTQTSTPMAE (80 aa)) are Cytoplasmic-facing. The chain crosses the membrane as a helical span at residues 81-101 (TLVPPALGPRPLLFTASLPVV). Topologically, residues 102–151 (RPLPANFRNDFRTIGLNGRSNTVWSMFESFSYDGNPFLFILLLIPRIINR) are lumenal. Residues 152–172 (LSATIFTFFCTLLSLHSISGG) form a helical membrane-spanning segment. Residues 173–584 (GNSGKPKISK…DEEDEENEEQ (412 aa)) are Cytoplasmic-facing. The 145-residue stretch at 426–570 (ETTGKQATLQ…WPNGSLLVEA (145 aa)) folds into the UBX domain.

In terms of assembly, component of the DOA10 ubiquitin ligase complex which contains E3 ligase SSM4/DOA10 and CDC48-binding protein UBX2/SEL1. Component of the HRD1 ubiquitin ligase complex which contains the E3 ligase HRD1, its cofactors HRD3, USA1 and DER1, substrate recruiting factor YOS9 and UBX2. In ERAD-L, HRD3 and YOS9 jointly bind misfolded glycoproteins in the endoplasmic reticulum (ER) lumen. Movement of ERAD-L substrates through the ER membrane is facilitated by HRD1 and DER1 which have lateral gates facing each other and which distort the membrane region between the lateral gates, making it much thinner than a normal phospholipid bilayer. Substrates insert into the membrane as a hairpin loop with one strand interacting with DER1 and the other with HRD1. Both the DOA10 and HRD1 ubiquitin ligase complexes interact with the heterotrimeric CDC48-NPL4-UFD1 ATPase complex which is recruited by UBX2 via its interaction with CDC48 and which moves ubiquitinated substrates to the cytosol for targeting to the proteasome.

The protein resides in the endoplasmic reticulum membrane. Its function is as follows. Integral endoplasmic reticulum membrane protein that coordinates the assembly of the ER-associated protein degradation (ERAD) machinery at the ER membrane. Mediates binding of CDC48 to the E3 ubiquitin ligases SSM4/DOA10 and HRD1, and to ERAD substrates. Component of the DOA10 ubiquitin ligase complex, which is part of the ERAD-C pathway responsible for the rapid degradation of membrane proteins with misfolded cytoplasmic domains. ERAD-C substrates are ubiquitinated through DOA10 in conjunction with the E2 ubiquitin-conjugating enzymes UBC6 and UBC7-CUE1. Also a component of the HRD1 ubiquitin ligase complex, which is part of the ERAD-L and ERAD-M pathways responsible for the rapid degradation of soluble lumenal and membrane proteins with misfolded lumenal domains (ERAD-L), or ER-membrane proteins with misfolded transmembrane domains (ERAD-M). ERAD-L substrates are ubiquitinated through HRD1 in conjunction with the E2 ubiquitin-conjugating enzymes UBC1 and UBC7-CUE1. Ubiquitinated substrates are then removed to the cytosol via the action of the CDC48-NPL4-UFD1 ATPase complex and targeted to the proteasome. This is UBX domain-containing protein 2 (UBX2) from Saccharomyces cerevisiae (strain ATCC 204508 / S288c) (Baker's yeast).